We begin with the raw amino-acid sequence, 51 residues long: Large ribosomal subunit protein eL39 (51 aa).

This sequence belongs to the eukaryotic ribosomal protein eL39 family.

The chain is Large ribosomal subunit protein eL39 from Methanosarcina barkeri (strain Fusaro / DSM 804).